The sequence spans 677 residues: Methionine--tRNA ligase (677 aa).

The short motif at 15-25 (PYANGSIHLGH) is the 'HIGH' region element. Zn(2+) contacts are provided by C146, C149, C159, and C162. A 'KMSKS' region motif is present at residues 333 to 337 (KMSKS). K336 is a binding site for ATP. In terms of domain architecture, tRNA-binding spans 576–677 (DFAKIDLRVA…EGAKPGMRVK (102 aa)).

Belongs to the class-I aminoacyl-tRNA synthetase family. MetG type 1 subfamily. Homodimer. Zn(2+) is required as a cofactor.

It localises to the cytoplasm. The catalysed reaction is tRNA(Met) + L-methionine + ATP = L-methionyl-tRNA(Met) + AMP + diphosphate. Functionally, is required not only for elongation of protein synthesis but also for the initiation of all mRNA translation through initiator tRNA(fMet) aminoacylation. In Aeromonas hydrophila subsp. hydrophila (strain ATCC 7966 / DSM 30187 / BCRC 13018 / CCUG 14551 / JCM 1027 / KCTC 2358 / NCIMB 9240 / NCTC 8049), this protein is Methionine--tRNA ligase.